The primary structure comprises 217 residues: Phosphoenolpyruvate guanylyltransferase (217 aa).

3 residues coordinate phosphoenolpyruvate: Thr-150, Gly-165, and Ser-168.

This sequence belongs to the CofC family.

The enzyme catalyses phosphoenolpyruvate + GTP + H(+) = enolpyruvoyl-2-diphospho-5'-guanosine + diphosphate. It functions in the pathway cofactor biosynthesis; coenzyme F420 biosynthesis. Functionally, guanylyltransferase that catalyzes the activation of phosphoenolpyruvate (PEP) as enolpyruvoyl-2-diphospho-5'-guanosine, via the condensation of PEP with GTP. It is involved in the biosynthesis of coenzyme F420, a hydride carrier cofactor. The polypeptide is Phosphoenolpyruvate guanylyltransferase (Mycobacterium marinum (strain ATCC BAA-535 / M)).